A 397-amino-acid polypeptide reads, in one-letter code: Elongation factor Tu (397 aa).

Positions 10-207 (KPHCNIGTIG…AVDEYIPQPE (198 aa)) constitute a tr-type G domain. Residues 19–26 (GHVDHGKT) are G1. 19 to 26 (GHVDHGKT) lines the GTP pocket. Residue threonine 26 participates in Mg(2+) binding. Positions 61–65 (GITIS) are G2. Residues 82 to 85 (DCPG) are G3. GTP contacts are provided by residues 82–86 (DCPGH) and 137–140 (NKVD). The G4 stretch occupies residues 137–140 (NKVD). The interval 175-177 (SAL) is G5.

This sequence belongs to the TRAFAC class translation factor GTPase superfamily. Classic translation factor GTPase family. EF-Tu/EF-1A subfamily. In terms of assembly, monomer.

The protein resides in the cytoplasm. The enzyme catalyses GTP + H2O = GDP + phosphate + H(+). In terms of biological role, GTP hydrolase that promotes the GTP-dependent binding of aminoacyl-tRNA to the A-site of ribosomes during protein biosynthesis. This Zymomonas mobilis subsp. mobilis (strain ATCC 31821 / ZM4 / CP4) protein is Elongation factor Tu.